The chain runs to 257 residues: Imidazole glycerol phosphate synthase subunit HisF (257 aa).

Active-site residues include Asp11 and Asp130.

It belongs to the HisA/HisF family. In terms of assembly, heterodimer of HisH and HisF.

It is found in the cytoplasm. The catalysed reaction is 5-[(5-phospho-1-deoxy-D-ribulos-1-ylimino)methylamino]-1-(5-phospho-beta-D-ribosyl)imidazole-4-carboxamide + L-glutamine = D-erythro-1-(imidazol-4-yl)glycerol 3-phosphate + 5-amino-1-(5-phospho-beta-D-ribosyl)imidazole-4-carboxamide + L-glutamate + H(+). The protein operates within amino-acid biosynthesis; L-histidine biosynthesis; L-histidine from 5-phospho-alpha-D-ribose 1-diphosphate: step 5/9. Its function is as follows. IGPS catalyzes the conversion of PRFAR and glutamine to IGP, AICAR and glutamate. The HisF subunit catalyzes the cyclization activity that produces IGP and AICAR from PRFAR using the ammonia provided by the HisH subunit. The protein is Imidazole glycerol phosphate synthase subunit HisF of Shewanella sp. (strain MR-7).